A 257-amino-acid polypeptide reads, in one-letter code: MELAERFLLDALAYLECALGVVCYVLLKLVGSPYGRYASSGSAFGLPARAAWTVQELPSLALPLLACAGAGAPAERLNRWPNCILLAMFLVHYAQRSLVFPFLIRGGKPMPLYAFLLAFIFCTYNGYLQSRYLSQYAVYADDWLSDPRFLTGSALWLIGMLINIHSDHVLRNLRKPGETGYKIPRGGLFEYISAANYFGEVVEWCGYALASWSIQGWAFAVFTFCVLFTRAQQHHKWYHEKFEDYPKFRKIMIPFLV.

Helical transmembrane passes span F7–L27, A50–A70, I84–I104, P109–Q129, F149–V169, and A208–F228.

Belongs to the steroid 5-alpha reductase family.

The protein localises to the microsome membrane. The protein resides in the endoplasmic reticulum membrane. The catalysed reaction is a 3-oxo-5alpha-steroid + NADP(+) = a 3-oxo-Delta(4)-steroid + NADPH + H(+). It carries out the reaction 5alpha-pregnane-3,20-dione + NADP(+) = progesterone + NADPH + H(+). It catalyses the reaction 17beta-hydroxy-5alpha-androstan-3-one + NADP(+) = testosterone + NADPH + H(+). The enzyme catalyses androst-4-ene-3,17-dione + NADPH + H(+) = 5alpha-androstan-3,17-dione + NADP(+). Converts testosterone into 5-alpha-dihydrotestosterone and progesterone or corticosterone into their corresponding 5-alpha-3-oxosteroids. It plays a central role in sexual differentiation and androgen physiology. The polypeptide is 3-oxo-5-alpha-steroid 4-dehydrogenase 1 (SRD5A1) (Bos taurus (Bovine)).